The chain runs to 363 residues: Inositol-3-phosphate synthase (363 aa).

Positions 68, 127, 147, 190, 225, and 238 each coordinate NAD(+).

Belongs to the myo-inositol 1-phosphate synthase family. As to quaternary structure, monomer. NAD(+) serves as cofactor.

The catalysed reaction is D-glucose 6-phosphate = 1D-myo-inositol 3-phosphate. It participates in polyol metabolism; myo-inositol biosynthesis; myo-inositol from D-glucose 6-phosphate: step 1/2. Functionally, key enzyme in myo-inositol biosynthesis pathway that catalyzes the conversion of glucose 6-phosphate to 1D-myo-inositol 3-phosphate in a NAD-dependent manner. Plays a key role in oxidative stress resistance as its product is the precursor of the protective antioxidant mycothiol (MSH or AcCys-GlcN-Ins). This chain is Inositol-3-phosphate synthase, found in Corynebacterium glutamicum (strain ATCC 13032 / DSM 20300 / JCM 1318 / BCRC 11384 / CCUG 27702 / LMG 3730 / NBRC 12168 / NCIMB 10025 / NRRL B-2784 / 534).